We begin with the raw amino-acid sequence, 160 residues long: Cyclic pyranopterin monophosphate synthase (160 aa).

Residues 74 to 76 (LSH) and 112 to 113 (ME) each bind substrate. The active site involves aspartate 127.

Belongs to the MoaC family. As to quaternary structure, homohexamer; trimer of dimers.

It carries out the reaction (8S)-3',8-cyclo-7,8-dihydroguanosine 5'-triphosphate = cyclic pyranopterin phosphate + diphosphate. It functions in the pathway cofactor biosynthesis; molybdopterin biosynthesis. Catalyzes the conversion of (8S)-3',8-cyclo-7,8-dihydroguanosine 5'-triphosphate to cyclic pyranopterin monophosphate (cPMP). This Geotalea uraniireducens (strain Rf4) (Geobacter uraniireducens) protein is Cyclic pyranopterin monophosphate synthase.